Consider the following 81-residue polypeptide: Putative defensin-like protein 26 (81 aa).

An N-terminal signal peptide occupies residues 1–21 (MASLKVFSFALLIVLTFSVIG). 2 disulfide bridges follow: Cys-33-Cys-81 and Cys-52-Cys-77.

This sequence belongs to the DEFL family.

It localises to the secreted. The protein is Putative defensin-like protein 26 of Arabidopsis thaliana (Mouse-ear cress).